The sequence spans 524 residues: Gamma-taxilin (524 aa).

Residues 1-10 (MATRLEEVTR) show a composition bias toward basic and acidic residues. Disordered regions lie at residues 1–37 (MATR…KFEI) and 64–86 (LQHQ…DEGS). 2 positions are modified to omega-N-methylarginine: Arg-12 and Arg-24. 3 positions are modified to phosphoserine: Ser-79, Ser-86, and Ser-97. The span at 106–115 (REEIPGREAR) shows a compositional bias: basic and acidic residues. The disordered stretch occupies residues 106-130 (REEIPGREARTGPPDGQQDSECSRN). Residues 153-465 (EEKLAALCKK…KEQVSIKAAD (313 aa)) are a coiled coil. At Tyr-283 the chain carries Phosphotyrosine. The interval 501 to 524 (VCEKSAAQKPSSSGSPAQGIESVD) is disordered. Phosphoserine is present on Ser-512.

It belongs to the taxilin family. As to quaternary structure, binds to the C-terminal coiled coil region of syntaxin family members STX1A, STX3A and STX4A. Forms a heterodimer with ATF4 in osteoblasts.

It is found in the nucleus membrane. Its subcellular location is the cytoplasm. It localises to the cytosol. Functionally, may be involved in intracellular vesicle traffic. Inhibits ATF4-mediated transcription, possibly by dimerizing with ATF4 to form inactive dimers that cannot bind DNA. May be involved in regulating bone mass density through an ATF4-dependent pathway. May be involved in cell cycle progression. This Mus musculus (Mouse) protein is Gamma-taxilin (Txlng).